A 205-amino-acid chain; its full sequence is Large ribosomal subunit protein uL4 (205 aa).

This sequence belongs to the universal ribosomal protein uL4 family. In terms of assembly, part of the 50S ribosomal subunit.

One of the primary rRNA binding proteins, this protein initially binds near the 5'-end of the 23S rRNA. It is important during the early stages of 50S assembly. It makes multiple contacts with different domains of the 23S rRNA in the assembled 50S subunit and ribosome. Its function is as follows. Forms part of the polypeptide exit tunnel. The sequence is that of Large ribosomal subunit protein uL4 from Roseobacter denitrificans (strain ATCC 33942 / OCh 114) (Erythrobacter sp. (strain OCh 114)).